The chain runs to 109 residues: uncharacterized protein (109 aa).

Transmembrane regions (helical) follow at residues 16-36 (YIPL…YYGL), 54-74 (TVYF…LLCL), and 80-100 (FCSS…TLAM).

The protein localises to the membrane. This is an uncharacterized protein from Schizosaccharomyces pombe (strain 972 / ATCC 24843) (Fission yeast).